The sequence spans 179 residues: MHALRSSVLALWLCLHVSVRAWMTYRSANGLDEYEPEDRIIFLGTKWCGNGNVAEGPEDLGPLKETDACCREHDMCPDLIAAGQSKHGLTNTASYTRLNCGCDEKFYNCLKNSAETGSGAVRFTYFTVLGTKCYRNEHPLICVKKGWFSCSKYELDKSQPKRYQWFDVSSNFAFPRMLT.

A signal peptide spans 1-21 (MHALRSSVLALWLCLHVSVRA). Positions 22-39 (WMTYRSANGLDEYEPEDR) are excised as a propeptide. Residues tryptophan 47, glycine 49, and glycine 51 each coordinate Ca(2+). Intrachain disulfides connect cysteine 48-cysteine 70, cysteine 69-cysteine 109, cysteine 76-cysteine 102, cysteine 100-cysteine 133, and cysteine 142-cysteine 150. The active site involves histidine 73. Aspartate 74 is a Ca(2+) binding site. The active site involves aspartate 103.

This sequence belongs to the phospholipase A2 family. Group III subfamily. It depends on Ca(2+) as a cofactor. As to expression, expressed by the venom gland.

The protein resides in the secreted. It catalyses the reaction a 1,2-diacyl-sn-glycero-3-phosphocholine + H2O = a 1-acyl-sn-glycero-3-phosphocholine + a fatty acid + H(+). May potentiate Xylotoxin(1)-Xa1a DRG activation and cell lysis, since the orthologous A.mellifera PA2 potentiates Xylotoxin(1)-Xa1a DRG activation and cell lysis. In vivo, intraplantar injection in mice may potentiate spontaneous pain behaviors and paw swelling caused by Xylotoxin(1)-Xa1a, since the orthologous A.mellifera PA2 shows this effect. PLA2 catalyzes the calcium-dependent hydrolysis of the 2-acyl groups in 3-sn-phosphoglycerides. This is Phospholipase A2 from Xylocopa aruana (Great carpenter bee).